The chain runs to 179 residues: Interleukin-10 (179 aa).

The first 19 residues, 1-19 (MPSSSALLCCLVFLAGVAA), serve as a signal peptide directing secretion. 2 cysteine pairs are disulfide-bonded: Cys31–Cys127 and Cys81–Cys133. Asn135 carries an N-linked (GlcNAc...) asparagine glycan.

Belongs to the IL-10 family. In terms of assembly, homodimer. Interacts with IL10RA and IL10RB.

The protein resides in the secreted. Major immune regulatory cytokine that acts on many cells of the immune system where it has profound anti-inflammatory functions, limiting excessive tissue disruption caused by inflammation. Mechanistically, IL10 binds to its heterotetrameric receptor comprising IL10RA and IL10RB leading to JAK1 and STAT2-mediated phosphorylation of STAT3. In turn, STAT3 translocates to the nucleus where it drives expression of anti-inflammatory mediators. Targets antigen-presenting cells (APCs) such as macrophages and monocytes and inhibits their release of pro-inflammatory cytokines including granulocyte-macrophage colony-stimulating factor /GM-CSF, granulocyte colony-stimulating factor/G-CSF, IL-1 alpha, IL-1 beta, IL-6, IL-8 and TNF-alpha. Also interferes with antigen presentation by reducing the expression of MHC-class II and co-stimulatory molecules, thereby inhibiting their ability to induce T cell activation. In addition, controls the inflammatory response of macrophages by reprogramming essential metabolic pathways including mTOR signaling. This is Interleukin-10 (IL10) from Cervus elaphus (Red deer).